We begin with the raw amino-acid sequence, 278 residues long: Protein canopy homolog 3 (278 aa).

An N-terminal signal peptide occupies residues 1-30 (MDSMPEPASRCLLLLPLLLLLLLLLPAPEL). Positions 47 to 271 (SKCEVCKYVA…EGIQKASPLT (225 aa)) constitute a Saposin B-type domain. 3 disulfides stabilise this stretch: cysteine 49/cysteine 206, cysteine 52/cysteine 194, and cysteine 104/cysteine 166. Asparagine 153 carries an N-linked (GlcNAc...) asparagine glycan. Residues 153 to 179 (NETSAEVADLKKQCDVLVEEFEEVIED) adopt a coiled-coil conformation. Positions 215–278 (KGDTAALGGK…PLTHSPPDEL (64 aa)) are disordered. Residues 233–243 (AKAAGGRSSSS) are compositionally biased toward low complexity.

This sequence belongs to the canopy family. Interacts with HSP90B1; this interaction is disrupted in the presence of ATP. Interacts with TLR1, TLR2, TLR4 and TLR9. Strongest interaction with TLR4.

It localises to the endoplasmic reticulum. In terms of biological role, toll-like receptor (TLR)-specific co-chaperone for HSP90B1. Required for proper TLR folding, except that of TLR3, and hence controls TLR exit from the endoplasmic reticulum. Consequently, required for both innate and adaptive immune responses. This chain is Protein canopy homolog 3 (CNPY3), found in Homo sapiens (Human).